The following is a 471-amino-acid chain: N(6)-adenine-specific methyltransferase METTL4 (471 aa).

Belongs to the MT-A70-like family.

The protein localises to the nucleus. It carries out the reaction a 2'-O-methyladenosine in U2 snRNA + S-adenosyl-L-methionine = an N(6)-methyl-2'-O-methyladenosine in U2 snRNA + S-adenosyl-L-homocysteine + H(+). The enzyme catalyses a 2'-deoxyadenosine in DNA + S-adenosyl-L-methionine = an N(6)-methyl-2'-deoxyadenosine in DNA + S-adenosyl-L-homocysteine + H(+). N(6)-adenine-specific methyltransferase that can methylate both RNAs and DNA. Acts as a N(6)-adenine-specific RNA methyltransferase by catalyzing formation of N6,2'-O-dimethyladenosine (m6A(m)) on internal positions of U2 small nuclear RNA (snRNA): methylates the 6th position of adenine residues with a pre-deposited 2'-O-methylation. Internal m6A(m) methylation of snRNAs regulates RNA splicing. Also able to act as a N(6)-adenine-specific DNA methyltransferase by mediating methylation of DNA on the 6th position of adenine (N(6)-methyladenosine). The existence of N(6)-methyladenosine (m6A) on DNA is however unclear in mammals, and additional evidences are required to confirm the role of the N(6)-adenine-specific DNA methyltransferase activity of METTL4 in vivo. Acts as a regulator of mitochondrial transcript levels and mitochondrial DNA (mtDNA) copy number by mediating mtDNA N(6)-methylation: m6A on mtDNA reduces transcription by repressing TFAM DNA-binding and bending. N(6)-methyladenosine deposition by METTL4 regulates Polycomb silencing by triggering ubiquitination and degradation of sensor proteins ASXL1 and MPND, leading to inactivation of the PR-DUB complex and subsequent preservation of Polycomb silencing. The chain is N(6)-adenine-specific methyltransferase METTL4 from Mus musculus (Mouse).